The following is a 228-amino-acid chain: NAD(P)H-hydrate epimerase (228 aa).

The YjeF N-terminal domain maps to 9–209; the sequence is VRAVERLAHR…LLGLTPAFLA (201 aa). 53–57 serves as a coordination point for (6S)-NADPHX; that stretch reads NNGGD. 2 residues coordinate K(+): N54 and D115. (6S)-NADPHX contacts are provided by residues 119–125 and D148; that span reads GIGLARP. S151 contacts K(+).

The protein belongs to the NnrE/AIBP family. The cofactor is K(+).

It catalyses the reaction (6R)-NADHX = (6S)-NADHX. It carries out the reaction (6R)-NADPHX = (6S)-NADPHX. Functionally, catalyzes the epimerization of the S- and R-forms of NAD(P)HX, a damaged form of NAD(P)H that is a result of enzymatic or heat-dependent hydration. This is a prerequisite for the S-specific NAD(P)H-hydrate dehydratase to allow the repair of both epimers of NAD(P)HX. The sequence is that of NAD(P)H-hydrate epimerase from Bordetella parapertussis (strain 12822 / ATCC BAA-587 / NCTC 13253).